The following is a 398-amino-acid chain: MQVTLLRSFSNDIPEFTVTEITGVLQRFMQETFYSIKVRGEISGLSRPNSGHVYFTLKDSNSVINAVCWNGTRLKVQFCDGLEVVCTGYLSVYQSKYQLIVTDMTLAGYGKLAAMLAELKKKLELEGLFSPARKKKLPFLPTKIGVITSPTGAVISDIISRVKQRFPSNVVVWPVQVQGDRASAMVIEAIKGFNSFADPPHVIIVARGGGSFEDLWPFNDEELARTVAASKIPIVSAIGHETDFTIIDYAADLRASTPTAAVELVLPEKSKLVASINEKFVRTKISFERIVKMQEYRLLRLHGILTEKKNSLLQKSRVALEYQQKIRYLLQVSLLRKRQYLESLMQRLSYYDSKHILSVGYAIVRDEHEKQISSVEALSTNDTITIELKDGKRRAIII.

The protein belongs to the XseA family. As to quaternary structure, heterooligomer composed of large and small subunits.

It is found in the cytoplasm. It carries out the reaction Exonucleolytic cleavage in either 5'- to 3'- or 3'- to 5'-direction to yield nucleoside 5'-phosphates.. In terms of biological role, bidirectionally degrades single-stranded DNA into large acid-insoluble oligonucleotides, which are then degraded further into small acid-soluble oligonucleotides. The sequence is that of Exodeoxyribonuclease 7 large subunit from Anaplasma phagocytophilum (strain HZ).